The primary structure comprises 239 residues: tRNA (guanine-N(1)-)-methyltransferase (239 aa).

S-adenosyl-L-methionine is bound by residues Gly-108 and 127 to 132 (LGDYVL).

The protein belongs to the RNA methyltransferase TrmD family. As to quaternary structure, homodimer.

It localises to the cytoplasm. It carries out the reaction guanosine(37) in tRNA + S-adenosyl-L-methionine = N(1)-methylguanosine(37) in tRNA + S-adenosyl-L-homocysteine + H(+). In terms of biological role, specifically methylates guanosine-37 in various tRNAs. The protein is tRNA (guanine-N(1)-)-methyltransferase of Streptococcus pneumoniae serotype 19F (strain G54).